Reading from the N-terminus, the 596-residue chain is Elongation factor 4 (596 aa).

The tr-type G domain occupies 2-184 (KQIRNFSIIA…VIVAKIPPPE (183 aa)). Residues 14–19 (DHGKST) and 131–134 (NKID) contribute to the GTP site.

The protein belongs to the TRAFAC class translation factor GTPase superfamily. Classic translation factor GTPase family. LepA subfamily.

The protein resides in the cell inner membrane. It carries out the reaction GTP + H2O = GDP + phosphate + H(+). Functionally, required for accurate and efficient protein synthesis under certain stress conditions. May act as a fidelity factor of the translation reaction, by catalyzing a one-codon backward translocation of tRNAs on improperly translocated ribosomes. Back-translocation proceeds from a post-translocation (POST) complex to a pre-translocation (PRE) complex, thus giving elongation factor G a second chance to translocate the tRNAs correctly. Binds to ribosomes in a GTP-dependent manner. In Shewanella baltica (strain OS223), this protein is Elongation factor 4.